The chain runs to 251 residues: Developmental protein SEPALLATA 1 (251 aa).

An MADS-box domain is found at 3 to 57 (RGRVELKRIENKINRQVTFAKRRNGLLKKAYELSVLCDAEVALIIFSNRGKLYEF). The stretch at 85–176 (AKELENSYRE…ALAMKLDDMI (92 aa)) forms a coiled coil. The K-box domain maps to 88-178 (LENSYREYLK…AMKLDDMIGV (91 aa)).

Heterodimer with AGAMOUS capable of binding to CArG-box sequences. Interacts with AGL16. Interacts with TT16/AGL32. Expressed mainly in carpels, and weakly in stamens.

The protein localises to the nucleus. Functionally, probable transcription factor. Functions with SEPALLATA2/AGL4 and SEPALLATA3/AGL9 to ensure proper development of petals, stamens and carpels, and to prevent the indeterminate growth of the flower meristem. Forms a heterodimer via the K-box domain with AGAMOUS, that could be involved in genes regulation during floral meristem development. The protein is Developmental protein SEPALLATA 1 (SEP1) of Arabidopsis thaliana (Mouse-ear cress).